The sequence spans 421 residues: CinA-like protein (421 aa).

It belongs to the CinA family.

This chain is CinA-like protein, found in Myxococcus xanthus (strain DK1622).